The chain runs to 155 residues: UPF0266 membrane protein lin0773 (155 aa).

The next 3 membrane-spanning stretches (helical) occupy residues 8–28, 46–66, and 70–90; these read IFLF…DAVI, RWDG…NTFF, and PFST…ICFF.

The protein belongs to the UPF0266 family.

The protein resides in the cell membrane. The chain is UPF0266 membrane protein lin0773 from Listeria innocua serovar 6a (strain ATCC BAA-680 / CLIP 11262).